The primary structure comprises 146 residues: Late protein OPG112 (146 aa).

The helical transmembrane segment at 10–32 threads the bilayer; that stretch reads LAMTAFFGELNTLDIMALIMSIF.

This sequence belongs to the orthopoxvirus OPG112 family.

The protein localises to the host membrane. The protein resides in the host cytoplasm. In terms of biological role, contributes to the formation of crescents and immature virions (IV). Interacts with phosphatidylinositol-3-phosphate (PI3P) and phosphatidylinositol-4-phosphate (PI4P) lipids in order to form virion membranes. Mechanistically, mediates proper formation of OPG125-hexamers, and hence the honey comb lattice and spherical immature virus. The protein is Late protein OPG112 (OPG112) of Homo sapiens (Human).